Here is a 285-residue protein sequence, read N- to C-terminus: Bifunctional protein FolD (285 aa).

NADP(+) contacts are provided by residues Gly164–Ser166, Ser189, and Ile230.

Belongs to the tetrahydrofolate dehydrogenase/cyclohydrolase family. In terms of assembly, homodimer.

It carries out the reaction (6R)-5,10-methylene-5,6,7,8-tetrahydrofolate + NADP(+) = (6R)-5,10-methenyltetrahydrofolate + NADPH. The enzyme catalyses (6R)-5,10-methenyltetrahydrofolate + H2O = (6R)-10-formyltetrahydrofolate + H(+). The protein operates within one-carbon metabolism; tetrahydrofolate interconversion. In terms of biological role, catalyzes the oxidation of 5,10-methylenetetrahydrofolate to 5,10-methenyltetrahydrofolate and then the hydrolysis of 5,10-methenyltetrahydrofolate to 10-formyltetrahydrofolate. In Oceanobacillus iheyensis (strain DSM 14371 / CIP 107618 / JCM 11309 / KCTC 3954 / HTE831), this protein is Bifunctional protein FolD.